Reading from the N-terminus, the 123-residue chain is Large ribosomal subunit protein uL14 (123 aa).

It belongs to the universal ribosomal protein uL14 family. Part of the 50S ribosomal subunit. Forms a cluster with proteins L3 and L19. In the 70S ribosome, L14 and L19 interact and together make contacts with the 16S rRNA in bridges B5 and B8.

Binds to 23S rRNA. Forms part of two intersubunit bridges in the 70S ribosome. The polypeptide is Large ribosomal subunit protein uL14 (Pectobacterium atrosepticum (strain SCRI 1043 / ATCC BAA-672) (Erwinia carotovora subsp. atroseptica)).